Here is a 293-residue protein sequence, read N- to C-terminus: Group 3 late-embryogenesis abundant protein, mitochondrial (293 aa).

The N-terminal 31 residues, 1–31 (MFLARNAGRAGYRGVVAYQQAASFSVSSAKA), are a transit peptide targeting the mitochondrion. The span at 27–43 (SSAKAAGSRSSGGSDAG) shows a compositional bias: low complexity. The segment at 27-52 (SSAKAAGSRSSGGSDAGDYAREAAEH) is disordered. LEA 11-mer repeat repeat units lie at residues 58–68 (KDLKNEASWKA), 83–93 (KDTVKEGVHDM), 123–133 (KNAAQDTAATL), 134–144 (KDKAGSAWNQA), 145–155 (KHVVEDKGEDV), 160–170 (KDTASKVWGKA), 171–181 (KHVAEDVKENA), 199–209 (KDKAADVLSGA), and 210–220 (KHTAENLAHKA). The disordered stretch occupies residues 217–293 (AHKAQAAIHD…KGPGQAGGRR (77 aa)). The span at 230–265 (SSGSQSQSQSQSQYRQGQQQGRQDQQQSKSQWGQTS) shows a compositional bias: low complexity. The segment covering 279-293 (GPQGGKGPGQAGGRR) has biased composition (gly residues).

This sequence belongs to the LEA type 4 family.

The protein resides in the mitochondrion. Mitochondrial heat soluble protein acting as a molecular shield in water-deficient condition. The chain is Group 3 late-embryogenesis abundant protein, mitochondrial from Ramazzottius varieornatus (Water bear).